The primary structure comprises 188 residues: Proline-rich protein 3 (188 aa).

Residues Met-1–Asp-157 form a disordered region. 2 stretches are compositionally biased toward pro residues: residues Ile-35–Met-46 and Leu-69–Gly-82. The segment covering Arg-83–Pro-96 has biased composition (low complexity). A compositionally biased stretch (basic and acidic residues) spans Pro-145–Asp-157. The segment at Lys-155–Val-183 adopts a C3H1-type zinc-finger fold.

This is Proline-rich protein 3 (PRR3) from Pan troglodytes (Chimpanzee).